A 493-amino-acid polypeptide reads, in one-letter code: Serine/threonine-protein kinase PBL34 (493 aa).

Disordered stretches follow at residues 1–42 (MGLD…EEEE) and 84–117 (SKSA…TPVI). Residue G2 is the site of N-myristoyl glycine attachment. The segment covering 12–37 (WKSEKPKETENKNHKKKNGDDNKSRN) has biased composition (basic and acidic residues). Low complexity predominate over residues 100-114 (SSTTTTSNAESSSST). Phosphothreonine is present on T131. The 287-residue stretch at 142–428 (FRPESLLGEG…VEALKPLPHL (287 aa)) folds into the Protein kinase domain. Residues 148–156 (LGEGGFGCV) and K180 each bind ATP. A Phosphotyrosine modification is found at Y225. D275 acts as the Proton acceptor in catalysis. A Phosphoserine modification is found at S279. T306 is subject to Phosphothreonine. The residue at position 309 (S309) is a Phosphoserine. 2 positions are modified to phosphothreonine: T310 and T315. At Y323 the chain carries Phosphotyrosine. A disordered region spans residues 447-493 (KNGSGRSQGFGSRNGQHQPVFRTLSSPHGSSPYRHQIPSPKPKGATT). Polar residues predominate over residues 450-475 (SGRSQGFGSRNGQHQPVFRTLSSPHG).

Belongs to the protein kinase superfamily. Ser/Thr protein kinase family. Interacts with the Xanthomonas campestris effector XopAC/AvrAC. Interacts with SD129. In terms of processing, phosphorylated by SD129 at Thr-306 and Thr-310 in response to the pathogen-associated molecular pattern (PAMP) 3-OH-C10:0, a medium-chain 3-hydroxy fatty acid.

Its subcellular location is the cell membrane. The catalysed reaction is L-seryl-[protein] + ATP = O-phospho-L-seryl-[protein] + ADP + H(+). It carries out the reaction L-threonyl-[protein] + ATP = O-phospho-L-threonyl-[protein] + ADP + H(+). In terms of biological role, involved in chitin-triggered immune signaling and is required for reactive oxygen species (ROS) production. Acts downstream of SD129 in defense signaling triggered by the pathogen-associated molecular pattern (PAMP) 3-OH-C10:0, a medium-chain 3-hydroxy fatty acid. The chain is Serine/threonine-protein kinase PBL34 from Arabidopsis thaliana (Mouse-ear cress).